A 486-amino-acid polypeptide reads, in one-letter code: Methionine aminopeptidase 2-2 (486 aa).

Residues 1–10 (MGSKSPEGHR) show a composition bias toward basic and acidic residues. The interval 1-120 (MGSKSPEGHR…ALPATELKQT (120 aa)) is disordered. A compositionally biased stretch (acidic residues) spans 46–56 (GDDDDDEDAEE). Residues 93–108 (KKKKRKKSNKKKKKTK) show a composition bias toward basic residues. Position 238 (His238) interacts with substrate. Residues Asp259, Asp270, and His339 each contribute to the a divalent metal cation site. Residue His347 coordinates substrate. A divalent metal cation-binding residues include Glu372 and Glu467.

Belongs to the peptidase M24A family. Methionine aminopeptidase eukaryotic type 2 subfamily. Co(2+) serves as cofactor. Zn(2+) is required as a cofactor. It depends on Mn(2+) as a cofactor. Requires Fe(2+) as cofactor.

The protein resides in the cytoplasm. The enzyme catalyses Release of N-terminal amino acids, preferentially methionine, from peptides and arylamides.. Functionally, cotranslationally removes the N-terminal methionine from nascent proteins. The N-terminal methionine is often cleaved when the second residue in the primary sequence is small and uncharged (Met-Ala-, Cys, Gly, Pro, Ser, Thr, or Val). The polypeptide is Methionine aminopeptidase 2-2 (Aspergillus fumigatus (strain ATCC MYA-4609 / CBS 101355 / FGSC A1100 / Af293) (Neosartorya fumigata)).